The chain runs to 293 residues: MSLIDWFAARRKDQFVGKVSQDTDEGDGLWVKCSECSQVAYRKDLISNFNVCSNCGHHNRINSDERINIIADKNSFKEFDSSLSPTDPLGFKDRRSYADRIKESQAGTGLRDGVITGFCSVNSMPLALAVMDFRFMGGSMGSVVGEKITRIIERATIENYPILIVCASGGARMQEGMLSLMQMAKISGALKKHKEKNLLYMPLLTHPTTGGVTASFAMLGDLILAEPKALIGFAGRRVIEQTLREKLPDNFQTAEYLLEHGFVDVIVKRKDLKTTLTKILKIHGVKELAEANI.

In terms of domain architecture, CoA carboxyltransferase N-terminal spans 29-293 (LWVKCSECSQ…GVKELAEANI (265 aa)). Zn(2+)-binding residues include cysteine 33, cysteine 36, cysteine 52, and cysteine 55. A C4-type zinc finger spans residues 33-55 (CSECSQVAYRKDLISNFNVCSNC).

The protein belongs to the AccD/PCCB family. Acetyl-CoA carboxylase is a heterohexamer composed of biotin carboxyl carrier protein (AccB), biotin carboxylase (AccC) and two subunits each of ACCase subunit alpha (AccA) and ACCase subunit beta (AccD). The cofactor is Zn(2+).

The protein localises to the cytoplasm. It carries out the reaction N(6)-carboxybiotinyl-L-lysyl-[protein] + acetyl-CoA = N(6)-biotinyl-L-lysyl-[protein] + malonyl-CoA. It functions in the pathway lipid metabolism; malonyl-CoA biosynthesis; malonyl-CoA from acetyl-CoA: step 1/1. Component of the acetyl coenzyme A carboxylase (ACC) complex. Biotin carboxylase (BC) catalyzes the carboxylation of biotin on its carrier protein (BCCP) and then the CO(2) group is transferred by the transcarboxylase to acetyl-CoA to form malonyl-CoA. The protein is Acetyl-coenzyme A carboxylase carboxyl transferase subunit beta of Prochlorococcus marinus (strain MIT 9312).